Reading from the N-terminus, the 376-residue chain is Chaperone protein DnaJ (376 aa).

The J domain occupies 5-70 (DFYETLGVAK…QKRAAYDRYG (66 aa)). The CR-type zinc finger occupies 137–215 (GKTAQIRVPT…CHGQGRVTEE (79 aa)). Zn(2+) is bound by residues C150, C153, C167, C170, C189, C192, C203, and C206. CXXCXGXG motif repeat units lie at residues 150–157 (CDVCSGSG), 167–174 (CGTCQGSG), 189–196 (CPTCHGRG), and 203–210 (CPKCHGQG).

The protein belongs to the DnaJ family. Homodimer. Zn(2+) serves as cofactor.

Its subcellular location is the cytoplasm. Participates actively in the response to hyperosmotic and heat shock by preventing the aggregation of stress-denatured proteins and by disaggregating proteins, also in an autonomous, DnaK-independent fashion. Unfolded proteins bind initially to DnaJ; upon interaction with the DnaJ-bound protein, DnaK hydrolyzes its bound ATP, resulting in the formation of a stable complex. GrpE releases ADP from DnaK; ATP binding to DnaK triggers the release of the substrate protein, thus completing the reaction cycle. Several rounds of ATP-dependent interactions between DnaJ, DnaK and GrpE are required for fully efficient folding. Also involved, together with DnaK and GrpE, in the DNA replication of plasmids through activation of initiation proteins. This Rhizobium leguminosarum bv. trifolii (strain WSM2304) protein is Chaperone protein DnaJ.